A 304-amino-acid chain; its full sequence is Putative S-adenosyl-L-methionine-dependent methyltransferase Mjls_1071 (304 aa).

S-adenosyl-L-methionine-binding positions include Asp130 and 159-160 (DL).

Belongs to the UPF0677 family.

Its function is as follows. Exhibits S-adenosyl-L-methionine-dependent methyltransferase activity. This Mycobacterium sp. (strain JLS) protein is Putative S-adenosyl-L-methionine-dependent methyltransferase Mjls_1071.